Here is a 141-residue protein sequence, read N- to C-terminus: MADLRLLLGFDYGSKQIGVAVGQVITGQARELCTLKAQNGVPDWAQVEKLIAEWKPDAIVVGLPLNMDGTPSEMSARAEKFARRLNGRFNLPVHTHDERLTTFEAKGERMARGGQRGSYRDNPVDAIAAALLLQGWLEANT.

Belongs to the YqgF nuclease family.

It localises to the cytoplasm. In terms of biological role, could be a nuclease involved in processing of the 5'-end of pre-16S rRNA. The polypeptide is Putative pre-16S rRNA nuclease (Pseudomonas putida (strain ATCC 47054 / DSM 6125 / CFBP 8728 / NCIMB 11950 / KT2440)).